We begin with the raw amino-acid sequence, 263 residues long: Phosphatidylglycerol--prolipoprotein diacylglyceryl transferase (263 aa).

The next 4 helical transmembrane spans lie at 10–30 (VAIT…LFGF), 56–76 (MVTY…ILFY), 91–111 (IWNG…AMWL), and 117–137 (GLGF…GLFF). Arginine 139 is an a 1,2-diacyl-sn-glycero-3-phospho-(1'-sn-glycerol) binding site. 3 consecutive transmembrane segments (helical) span residues 171 to 191 (PSQL…LWVF), 199 to 219 (GHVS…VEFV), and 231 to 251 (FGWL…GLWL).

The protein belongs to the Lgt family.

Its subcellular location is the cell inner membrane. The catalysed reaction is L-cysteinyl-[prolipoprotein] + a 1,2-diacyl-sn-glycero-3-phospho-(1'-sn-glycerol) = an S-1,2-diacyl-sn-glyceryl-L-cysteinyl-[prolipoprotein] + sn-glycerol 1-phosphate + H(+). Its pathway is protein modification; lipoprotein biosynthesis (diacylglyceryl transfer). Functionally, catalyzes the transfer of the diacylglyceryl group from phosphatidylglycerol to the sulfhydryl group of the N-terminal cysteine of a prolipoprotein, the first step in the formation of mature lipoproteins. In Nitratidesulfovibrio vulgaris (strain DP4) (Desulfovibrio vulgaris), this protein is Phosphatidylglycerol--prolipoprotein diacylglyceryl transferase.